The chain runs to 83 residues: UPF0248 protein PH1212.1 (83 aa).

This sequence belongs to the UPF0248 family.

The sequence is that of UPF0248 protein PH1212.1 from Pyrococcus horikoshii (strain ATCC 700860 / DSM 12428 / JCM 9974 / NBRC 100139 / OT-3).